Here is a 43-residue protein sequence, read N- to C-terminus: Disintegrin CV (43 aa).

4 disulfide bridges follow: cysteine 1/cysteine 10, cysteine 6/cysteine 29, cysteine 7/cysteine 34, and cysteine 19/cysteine 36. The region spanning 1–43 (CTTGPCCRQCKLKPAGTTCWRTSVSSHYCTGRSCECPSYPGNG) is the Disintegrin domain. Residues 21 to 23 (RTS) carry the Cell attachment site; atypical (RTS) motif.

The protein belongs to the disintegrin family. Short disintegrin subfamily. Monomer. As to expression, expressed by the venom gland.

The protein localises to the secreted. Specifically interacts with the alpha-1/beta-1 integrin (ITGA1/ITGB1). Exhibits highly inhibitory effects on cell adhesion and cell migration to collagens I and IV. Also shows in vivo anti-angiogenic activity. This Cerastes vipera (Sahara sand viper) protein is Disintegrin CV.